The sequence spans 1070 residues: DNA-directed RNA polymerase subunit beta (1070 aa).

It belongs to the RNA polymerase beta chain family. In plastids the minimal PEP RNA polymerase catalytic core is composed of four subunits: alpha, beta, beta', and beta''. When a (nuclear-encoded) sigma factor is associated with the core the holoenzyme is formed, which can initiate transcription.

The protein localises to the plastid. It localises to the chloroplast. It carries out the reaction RNA(n) + a ribonucleoside 5'-triphosphate = RNA(n+1) + diphosphate. DNA-dependent RNA polymerase catalyzes the transcription of DNA into RNA using the four ribonucleoside triphosphates as substrates. This Morus indica (Mulberry) protein is DNA-directed RNA polymerase subunit beta.